Here is a 324-residue protein sequence, read N- to C-terminus: MAAVKTPVIVVPVIDRPPSETFPNVHEHINDQKFDDVKDNEVMPEKRNVVVVKDDPDHYKDYAFIQWTGGNIRNDDKYTHFFSGFCNTMCTEETKRNIARHLALWDSNFFTELENKKVEYVVIVENDNVIEDITFLRPVLKAMHDKKIDILQMREIITGNKVKTELVMDKNHTIFTYTGGYDVSLSAYIIRVTTALNIVDEIIKSGGLSSGFYFEIARIENEMKINRQILDNAAKYVEHDPRLVAEHRFENMKPNFWSRIGTAAAKRYPGVMYAFTTPLISFFGLFDINVIGLIVILFIMFMLIFNVKSKLLWFLTGTFVTAFI.

The Virion surface portion of the chain corresponds to 1-284 (MAAVKTPVIV…FTTPLISFFG (284 aa)). A helical; Signal-anchor transmembrane segment spans residues 285-305 (LFDINVIGLIVILFIMFMLIF). Residues 306-324 (NVKSKLLWFLTGTFVTAFI) are Intravirion-facing.

The protein belongs to the orthopoxvirus OPG108 family. Post-translationally, does not contain disulfide bonds.

Its subcellular location is the virion membrane. In terms of biological role, envelope protein that binds to heparan sulfate on the cell surface and might provide virion attachment to target cell. The sequence is that of Envelope protein H3 (OPG108) from Homo sapiens (Human).